We begin with the raw amino-acid sequence, 356 residues long: Fructose-bisphosphate aldolase 1, chloroplastic (356 aa).

The transit peptide at 1 to 6 (GLTIRA) directs the protein to the chloroplast. Arg-53 and Lys-143 together coordinate substrate. The active-site Proton acceptor is the Glu-183. Lys-225 functions as the Schiff-base intermediate with dihydroxyacetone-P in the catalytic mechanism.

Belongs to the class I fructose-bisphosphate aldolase family.

Its subcellular location is the plastid. It is found in the chloroplast. It carries out the reaction beta-D-fructose 1,6-bisphosphate = D-glyceraldehyde 3-phosphate + dihydroxyacetone phosphate. It participates in carbohydrate degradation; glycolysis; D-glyceraldehyde 3-phosphate and glycerone phosphate from D-glucose: step 4/4. In Pisum sativum (Garden pea), this protein is Fructose-bisphosphate aldolase 1, chloroplastic.